The following is a 167-amino-acid chain: Large ribosomal subunit protein bL9 (167 aa).

This sequence belongs to the bacterial ribosomal protein bL9 family.

Functionally, binds to the 23S rRNA. The protein is Large ribosomal subunit protein bL9 of Chlamydia trachomatis serovar L2 (strain ATCC VR-902B / DSM 19102 / 434/Bu).